A 142-amino-acid chain; its full sequence is Hemoglobin subunit alpha-1 (142 aa).

The Globin domain occupies 2–142 (LLSADDKKHI…VSSVLTSKYR (141 aa)). H59 serves as a coordination point for O2. A heme b-binding site is contributed by H88.

Belongs to the globin family. In terms of assembly, heterotetramer of two alpha chains and two beta chains. In terms of tissue distribution, red blood cells.

In terms of biological role, involved in oxygen transport from the lung to the various peripheral tissues. The chain is Hemoglobin subunit alpha-1 (hba1) from Xenopus borealis (Kenyan clawed frog).